The chain runs to 214 residues: A-type ATP synthase subunit D (214 aa).

It belongs to the V-ATPase D subunit family. In terms of assembly, has multiple subunits with at least A(3), B(3), C, D, E, F, H, I and proteolipid K(x).

It is found in the cell membrane. Its function is as follows. Component of the A-type ATP synthase that produces ATP from ADP in the presence of a proton gradient across the membrane. This Desulfurococcus sp. (strain SY) protein is A-type ATP synthase subunit D.